We begin with the raw amino-acid sequence, 236 residues long: Concanavalin-Ma (236 aa).

Mn(2+) contacts are provided by E8 and D10. 4 residues coordinate Ca(2+): D10, Y12, N14, and D19. An a carbohydrate-binding site is contributed by Y12. The Mn(2+) site is built by D19 and H24. Position 98-99 (98-99 (LY)) interacts with a carbohydrate. D207 is a binding site for Ca(2+). R227 is an a carbohydrate binding site.

This sequence belongs to the leguminous lectin family. In terms of assembly, homotetramer.

Functionally, glucose/D-mannose specific lectin. The chain is Concanavalin-Ma from Canavalia rosea (Beach bean).